The primary structure comprises 106 residues: Iron-sulfur cluster assembly protein CyaY (106 aa).

The protein belongs to the frataxin family.

In terms of biological role, involved in iron-sulfur (Fe-S) cluster assembly. May act as a regulator of Fe-S biogenesis. This chain is Iron-sulfur cluster assembly protein CyaY, found in Yersinia pestis bv. Antiqua (strain Antiqua).